The sequence spans 177 residues: Flavodoxin (177 aa).

The region spanning 4–173 (IGIFFGSDTG…RIDTWLDKLK (170 aa)) is the Flavodoxin-like domain.

The protein belongs to the flavodoxin family. The cofactor is FMN.

Functionally, low-potential electron donor to a number of redox enzymes. NifF is the electron donor to nitrogenase. This Enterobacter agglomerans (Erwinia herbicola) protein is Flavodoxin (nifF).